The sequence spans 380 residues: Cystathionine gamma-synthase (380 aa).

At Lys-195 the chain carries N6-(pyridoxal phosphate)lysine.

This sequence belongs to the trans-sulfuration enzymes family. Homotetramer. Requires pyridoxal 5'-phosphate as cofactor.

It localises to the cytoplasm. The catalysed reaction is O-succinyl-L-homoserine + L-cysteine = L,L-cystathionine + succinate + H(+). Catalyzes the formation of L-cystathionine from O-succinyl-L-homoserine (OSHS) and L-cysteine, via a gamma-replacement reaction. In the absence of thiol, catalyzes gamma-elimination to form 2-oxobutanoate, succinate and ammonia. This is Cystathionine gamma-synthase (metB) from Helicobacter pylori (strain ATCC 700392 / 26695) (Campylobacter pylori).